We begin with the raw amino-acid sequence, 467 residues long: Glutamate--tRNA ligase (467 aa).

The 'HIGH' region signature appears at 9-19; that stretch reads PSPTGYLHIGG. The 'KMSKS' region signature appears at 237–241; it reads KLSKR. Lysine 240 serves as a coordination point for ATP.

The protein belongs to the class-I aminoacyl-tRNA synthetase family. Glutamate--tRNA ligase type 1 subfamily. In terms of assembly, monomer.

Its subcellular location is the cytoplasm. The enzyme catalyses tRNA(Glu) + L-glutamate + ATP = L-glutamyl-tRNA(Glu) + AMP + diphosphate. Catalyzes the attachment of glutamate to tRNA(Glu) in a two-step reaction: glutamate is first activated by ATP to form Glu-AMP and then transferred to the acceptor end of tRNA(Glu). The chain is Glutamate--tRNA ligase from Xanthomonas euvesicatoria pv. vesicatoria (strain 85-10) (Xanthomonas campestris pv. vesicatoria).